Here is a 409-residue protein sequence, read N- to C-terminus: MNSPSPPRAEPKLRDSCHACAASKLKCSKEKPSCARCLKRNKPCQYLVTRRAGRHHGSRSKKVPTISPASAPEPQPFSTTPPDGDFMIEDYFATPISLQFPDFVDTSNGSTTQDWSTHPALFDTTNTSPLFDTSTLNFFDAAESLSAPLQLPTSTIPFPEISHGLQGLPTEHHCGCLVQVLQLMKKLSPSTPVHCTAWPGQQLDKDSGSALLLQPIIAENQSILETVATVLACPCSEDGFLLSTICLVVLKVMSRYEAAARCASLSATNSRSEDALVEDNVAQFTATGSSVAVLIGSYKVEGEGFDRMRAHIVLSELHRVQGLMKGLSERLHVAGRNAKDDNILHASRMNVDSDAVTGAGASAGEDVPMGDATEAVLPFHASFFGQLEANLRRRLRRLSESTTDLVRRA.

A DNA-binding region (zn(2)-C6 fungal-type) is located at residues 17-44 (CHACAASKLKCSKEKPSCARCLKRNKPC). A disordered region spans residues 49-83 (TRRAGRHHGSRSKKVPTISPASAPEPQPFSTTPPD). Residues 51–62 (RAGRHHGSRSKK) are compositionally biased toward basic residues.

Its subcellular location is the nucleus. Functionally, transcriptional regulator; part of the gene cluster that mediates the biosynthesis of dibenzodioxocinones such as pestalotiollide B, a novel class of inhibitors against cholesterol ester transfer protein (CEPT). The sequence is that of Transcriptional regulator GME11370 from Pestalotiopsis microspora.